A 629-amino-acid polypeptide reads, in one-letter code: Translation initiation factor IF-2 (629 aa).

The segment at 1 to 20 (MAKNIKTNKKPQQVNKKEMS) is disordered. A tr-type G domain is found at 127–297 (HRAPIVTIMG…LLIAEMQDYK (171 aa)). The tract at residues 136 to 143 (GHVDHGKT) is G1. A GTP-binding site is contributed by 136 to 143 (GHVDHGKT). The tract at residues 161–165 (GITQA) is G2. Residues 183–186 (DTPG) form a G3 region. GTP contacts are provided by residues 183-187 (DTPGH) and 237-240 (NKCD). Residues 237-240 (NKCD) are G4. Residues 273 to 275 (SAK) are G5.

Belongs to the TRAFAC class translation factor GTPase superfamily. Classic translation factor GTPase family. IF-2 subfamily.

It is found in the cytoplasm. In terms of biological role, one of the essential components for the initiation of protein synthesis. Protects formylmethionyl-tRNA from spontaneous hydrolysis and promotes its binding to the 30S ribosomal subunits. Also involved in the hydrolysis of GTP during the formation of the 70S ribosomal complex. The chain is Translation initiation factor IF-2 from Mesoplasma florum (strain ATCC 33453 / NBRC 100688 / NCTC 11704 / L1) (Acholeplasma florum).